A 448-amino-acid chain; its full sequence is Antizyme inhibitor 1 (448 aa).

Belongs to the Orn/Lys/Arg decarboxylase class-II family. ODC antizyme inhibitor subfamily. In terms of assembly, monomer. Interacts with OAZ1 and OAZ3; this interaction disrupts the interaction between the antizyme and ODC1. Post-translationally, ubiquitinated, leading to its proteasomal degradation; a process that is reduced in presence of antizyme OAZ1. Expressed during testis development.

It localises to the nucleus. Antizyme inhibitor (AZI) protein that positively regulates ornithine decarboxylase (ODC) activity and polyamine uptake. AZI is an enzymatically inactive ODC homolog that counteracts the negative effect of ODC antizymes (AZs) OAZ1, OAZ2 and OAZ3 on ODC activity by competing with ODC for antizyme-binding. Inhibits antizyme-dependent ODC degradation and releases ODC monomers from their inactive complex with antizymes, leading to formation of the catalytically active ODC homodimer and restoring polyamine production. In Mus musculus (Mouse), this protein is Antizyme inhibitor 1 (Azin1).